The chain runs to 1026 residues: Multidrug resistance protein MdtC (1026 aa).

11 helical membrane passes run 15–35 (ILIA…LPVA), 333–353 (EVEE…FLFL), 360–380 (LIPA…MYLC), 387–407 (LSLM…IVVL), 431–451 (VGFT…PLLL), 463–483 (FAVT…TLTP), 528–548 (LVGV…IAIP), 853–873 (LILI…LYES), 897–917 (LFNA…IGIV), 953–973 (PIMM…LSGG), and 984–1004 (ITIV…TPVV).

Belongs to the resistance-nodulation-cell division (RND) (TC 2.A.6) family. MdtC subfamily. In terms of assembly, part of a tripartite efflux system composed of MdtA, MdtB and MdtC. MdtC forms a heteromultimer with MdtB.

The protein localises to the cell inner membrane. This Salmonella schwarzengrund (strain CVM19633) protein is Multidrug resistance protein MdtC.